Here is a 62-residue protein sequence, read N- to C-terminus: Large ribosomal subunit protein bL32 (62 aa).

Positions 1 to 16 (MAVPKRKTSPSRRGMR) are enriched in basic residues. The tract at residues 1-62 (MAVPKRKTSP…QILKPKTAEV (62 aa)) is disordered. The segment covering 28–44 (VEDKDSGELRRPHHLDL) has biased composition (basic and acidic residues).

It belongs to the bacterial ribosomal protein bL32 family.

In Azorhizobium caulinodans (strain ATCC 43989 / DSM 5975 / JCM 20966 / LMG 6465 / NBRC 14845 / NCIMB 13405 / ORS 571), this protein is Large ribosomal subunit protein bL32.